Consider the following 518-residue polypeptide: Protein nucleotidyltransferase YdiU (518 aa).

Residues G100, G102, R103, K123, D135, G136, R193, and R200 each coordinate ATP. D270 serves as the catalytic Proton acceptor. Positions 271 and 280 each coordinate Mg(2+). D280 contacts ATP.

It belongs to the SELO family. It depends on Mg(2+) as a cofactor. The cofactor is Mn(2+).

It catalyses the reaction L-seryl-[protein] + ATP = 3-O-(5'-adenylyl)-L-seryl-[protein] + diphosphate. The enzyme catalyses L-threonyl-[protein] + ATP = 3-O-(5'-adenylyl)-L-threonyl-[protein] + diphosphate. It carries out the reaction L-tyrosyl-[protein] + ATP = O-(5'-adenylyl)-L-tyrosyl-[protein] + diphosphate. The catalysed reaction is L-histidyl-[protein] + UTP = N(tele)-(5'-uridylyl)-L-histidyl-[protein] + diphosphate. It catalyses the reaction L-seryl-[protein] + UTP = O-(5'-uridylyl)-L-seryl-[protein] + diphosphate. The enzyme catalyses L-tyrosyl-[protein] + UTP = O-(5'-uridylyl)-L-tyrosyl-[protein] + diphosphate. In terms of biological role, nucleotidyltransferase involved in the post-translational modification of proteins. It can catalyze the addition of adenosine monophosphate (AMP) or uridine monophosphate (UMP) to a protein, resulting in modifications known as AMPylation and UMPylation. This is Protein nucleotidyltransferase YdiU from Xanthomonas oryzae pv. oryzae (strain PXO99A).